The sequence spans 205 residues: Glycerol-3-phosphate acyltransferase 1 (205 aa).

A run of 5 helical transmembrane segments spans residues T7 to L27, W52 to V74, H78 to F100, L125 to F145, and A160 to I180.

This sequence belongs to the PlsY family. As to quaternary structure, probably interacts with PlsX.

The protein localises to the cell membrane. It catalyses the reaction an acyl phosphate + sn-glycerol 3-phosphate = a 1-acyl-sn-glycero-3-phosphate + phosphate. Its pathway is lipid metabolism; phospholipid metabolism. In terms of biological role, catalyzes the transfer of an acyl group from acyl-phosphate (acyl-PO(4)) to glycerol-3-phosphate (G3P) to form lysophosphatidic acid (LPA). This enzyme utilizes acyl-phosphate as fatty acyl donor, but not acyl-CoA or acyl-ACP. The protein is Glycerol-3-phosphate acyltransferase 1 of Lactobacillus acidophilus (strain ATCC 700396 / NCK56 / N2 / NCFM).